The primary structure comprises 91 residues: Large ribosomal subunit protein bL27 (91 aa).

Belongs to the bacterial ribosomal protein bL27 family. As to quaternary structure, part of the 50S ribosomal subunit. Contacts protein L18.

Its function is as follows. Binds the 5S and 23S rRNAs and also the tRNA in the P site. The sequence is that of Large ribosomal subunit protein bL27 (rpmA) from Deinococcus radiodurans (strain ATCC 13939 / DSM 20539 / JCM 16871 / CCUG 27074 / LMG 4051 / NBRC 15346 / NCIMB 9279 / VKM B-1422 / R1).